The primary structure comprises 225 residues: Ribosome maturation factor RimM (225 aa).

A PRC barrel domain is found at 144-225 (ADEFYWVDLI…RIVVDWEADY (82 aa)).

This sequence belongs to the RimM family. As to quaternary structure, binds ribosomal protein uS19.

Its subcellular location is the cytoplasm. In terms of biological role, an accessory protein needed during the final step in the assembly of 30S ribosomal subunit, possibly for assembly of the head region. Essential for efficient processing of 16S rRNA. May be needed both before and after RbfA during the maturation of 16S rRNA. It has affinity for free ribosomal 30S subunits but not for 70S ribosomes. The chain is Ribosome maturation factor RimM from Burkholderia orbicola (strain AU 1054).